The following is a 367-amino-acid chain: MNVLEVMKRLDDMPESYKTMSMEEMEVRVRAIKERFGKRLFIPGHHYQKDEVIQFADATGDSLQLAQVAAQNSEAEYIVFCGVHFMAETADILTGDHQKVILPDMRAGCSMADMADITQVERAWPILQELFGDTILPLTYVNSTAAIKAFVGRRGGATVTSSNAKKMVEWAFTQKERIFFLPDQHLGRNTAYELGISLDEMAVWDPHTDRLEYKGDIKKVKVILWKGHCSVHENFTVRHIEYIRRTKPDMNIIVHPECSWDVVQQADYAGSTKYIIETIRNAPSGSKWAIGTEMNLVNRLMHEHPDKEIISLNPYMCPCLTMNRIDLPHLLWALESLERGEIVNQITVPPLIAKDAAQALARMLALA.

Residues H45 and S62 each contribute to the iminosuccinate site. C109 provides a ligand contact to [4Fe-4S] cluster. Residues 140-142 (YVN) and S161 each bind iminosuccinate. C229 serves as a coordination point for [4Fe-4S] cluster. Iminosuccinate contacts are provided by residues 255–257 (HPE) and T272. C319 is a [4Fe-4S] cluster binding site.

Belongs to the quinolinate synthase family. Type 3 subfamily. [4Fe-4S] cluster serves as cofactor.

It localises to the cytoplasm. It carries out the reaction iminosuccinate + dihydroxyacetone phosphate = quinolinate + phosphate + 2 H2O + H(+). It functions in the pathway cofactor biosynthesis; NAD(+) biosynthesis; quinolinate from iminoaspartate: step 1/1. Functionally, catalyzes the condensation of iminoaspartate with dihydroxyacetone phosphate to form quinolinate. The polypeptide is Quinolinate synthase (Geobacillus sp. (strain WCH70)).